Reading from the N-terminus, the 217-residue chain is 3,4-dihydroxy-2-butanone 4-phosphate synthase (217 aa).

Residues 37–38, D42, 150–154, and E174 contribute to the D-ribulose 5-phosphate site; these read RE and RGGHT. Position 38 (E38) interacts with Mg(2+). H153 is a binding site for Mg(2+).

It belongs to the DHBP synthase family. In terms of assembly, homodimer. Requires Mg(2+) as cofactor. Mn(2+) is required as a cofactor.

The catalysed reaction is D-ribulose 5-phosphate = (2S)-2-hydroxy-3-oxobutyl phosphate + formate + H(+). The protein operates within cofactor biosynthesis; riboflavin biosynthesis; 2-hydroxy-3-oxobutyl phosphate from D-ribulose 5-phosphate: step 1/1. Its function is as follows. Catalyzes the conversion of D-ribulose 5-phosphate to formate and 3,4-dihydroxy-2-butanone 4-phosphate. The chain is 3,4-dihydroxy-2-butanone 4-phosphate synthase from Salmonella arizonae (strain ATCC BAA-731 / CDC346-86 / RSK2980).